We begin with the raw amino-acid sequence, 495 residues long: Glycerol kinase (495 aa).

Thr-11 serves as a coordination point for ADP. ATP contacts are provided by Thr-11, Thr-12, and Ser-13. Thr-11 contacts sn-glycerol 3-phosphate. An ADP-binding site is contributed by Arg-15. 4 residues coordinate sn-glycerol 3-phosphate: Arg-81, Glu-82, Tyr-133, and Asp-242. Residues Arg-81, Glu-82, Tyr-133, Asp-242, and Gln-243 each contribute to the glycerol site. ADP contacts are provided by Thr-264 and Gly-307. ATP is bound by residues Thr-264, Gly-307, Gln-311, and Gly-410. Gly-410 lines the ADP pocket.

The protein belongs to the FGGY kinase family.

The catalysed reaction is glycerol + ATP = sn-glycerol 3-phosphate + ADP + H(+). Its pathway is polyol metabolism; glycerol degradation via glycerol kinase pathway; sn-glycerol 3-phosphate from glycerol: step 1/1. Inhibited by fructose 1,6-bisphosphate (FBP). In terms of biological role, key enzyme in the regulation of glycerol uptake and metabolism. Catalyzes the phosphorylation of glycerol to yield sn-glycerol 3-phosphate. The chain is Glycerol kinase from Roseobacter denitrificans (strain ATCC 33942 / OCh 114) (Erythrobacter sp. (strain OCh 114)).